We begin with the raw amino-acid sequence, 155 residues long: Endoribonuclease YbeY (155 aa).

3 residues coordinate Zn(2+): H113, H117, and H123.

This sequence belongs to the endoribonuclease YbeY family. It depends on Zn(2+) as a cofactor.

The protein resides in the cytoplasm. Functionally, single strand-specific metallo-endoribonuclease involved in late-stage 70S ribosome quality control and in maturation of the 3' terminus of the 16S rRNA. The chain is Endoribonuclease YbeY from Ureaplasma parvum serovar 3 (strain ATCC 27815 / 27 / NCTC 11736).